The primary structure comprises 528 residues: Tyrosine--tRNA ligase, cytoplasmic (528 aa).

N-acetylmethionine is present on M1. G2 bears the N-acetylglycine; in Tyrosine--tRNA ligase, cytoplasmic, N-terminally processed mark. Residue Y39 coordinates L-tyrosine. A trans-resveratrol-binding site is contributed by Y39. The 'HIGH' region signature appears at 44–52 (TTGKPHVAY). L-tyrosine-binding residues include Y166, Q170, D173, and Q188. The trans-resveratrol site is built by Q170 and D173. K197 is subject to N6-acetyllysine. S205 is modified (phosphoserine). Residue K206 is modified to N6-acetyllysine. The 'KMSKS' region motif lies at 222 to 226 (KMSSS). Positions 242–247 (KKKLKK) match the Nuclear localization signal motif. The interval 339–363 (AAYPDPSKQKPMAKGPAKNSEPEEV) is disordered. Residues 364–468 (IPSRLDIRVG…AGSAPGEHVF (105 aa)) form the tRNA-binding domain. S386 is subject to Phosphoserine. Residues K474, K482, and K490 each carry the N6-acetyllysine modification.

It belongs to the class-I aminoacyl-tRNA synthetase family. Homodimer. Interacts (when binding to resveratrol) with PARP1; interaction stimulates the poly-ADP-ribosyltransferase activity of PARP1.

The protein resides in the cytoplasm. Its subcellular location is the nucleus. It carries out the reaction tRNA(Tyr) + L-tyrosine + ATP = L-tyrosyl-tRNA(Tyr) + AMP + diphosphate + H(+). Resveratrol strongly inhibits the tyrosine--tRNA ligase activity. Tyrosine--tRNA ligase that catalyzes the attachment of tyrosine to tRNA(Tyr) in a two-step reaction: tyrosine is first activated by ATP to form Tyr-AMP and then transferred to the acceptor end of tRNA(Tyr). Also acts as a positive regulator of poly-ADP-ribosylation in the nucleus, independently of its tyrosine--tRNA ligase activity. Activity is switched upon resveratrol-binding: resveratrol strongly inhibits the tyrosine--tRNA ligase activity and promotes relocalization to the nucleus, where YARS1 specifically stimulates the poly-ADP-ribosyltransferase activity of PARP1. This Homo sapiens (Human) protein is Tyrosine--tRNA ligase, cytoplasmic.